A 548-amino-acid chain; its full sequence is (S)-beta-macrocarpene synthase (548 aa).

Residues Asp-302 and Asp-306 each coordinate Mg(2+). Substrate-binding residues include Asp-302, Asp-306, Arg-443, and Asn-446. Positions 302–306 match the DDXXD motif motif; the sequence is DDTLD. The Mg(2+) site is built by Asn-446, Ser-450, and Glu-454.

It belongs to the terpene synthase family. Monomer. The cofactor is Mg(2+). Mn(2+) serves as cofactor. Expressed in roots. Not detected in leaves, unless damaged by herbivory or infected by fungi.

It localises to the cytoplasm. The enzyme catalyses (S)-beta-bisabolene = (S)-beta-macrocarpene. The catalysed reaction is (2E,6E)-farnesyl diphosphate = (S)-beta-bisabolene + diphosphate. It catalyses the reaction (2E)-geranyl diphosphate = (4S)-limonene + diphosphate. It carries out the reaction (2E)-geranyl diphosphate = beta-myrcene + diphosphate. The enzyme catalyses (2E)-geranyl diphosphate = terpinolene + diphosphate. The catalysed reaction is (2E)-geranyl diphosphate + H2O = (S)-linalool + diphosphate. The protein operates within secondary metabolite biosynthesis; terpenoid biosynthesis. Its function is as follows. Involved in the biosynthesis of the bicyclic sesquiterpene (S)-beta-macrocarpene. Can use both geranyl diphosphate and farnesyl diphosphate as substrate, but not geranylgeranyl diphosphate. Produces mainly (S)-beta-macrocarpene, but also smaller amounts of beta-bisabolene and (E)-beta-farnesene when used with farnesyl diphosphate as substrate. In the presence of geranyl diphosphate, produces the acyclic monoterpenes beta-myrcene and linalool along with minor amounts of the cyclic compounds limonene, alpha-thujene, sabinene and alpha-terpinolene. May be involved in plant defense. This chain is (S)-beta-macrocarpene synthase, found in Zea mays (Maize).